A 174-amino-acid polypeptide reads, in one-letter code: Centrosomal protein 20 (174 aa).

Positions 1-104 (MATVTELKAV…AFEESKDNSI (104 aa)) are necessary and sufficient for homooligomerization and localization to centrosomes and pericentriolar satellites. One can recognise a LisH domain in the interval 49–81 (ENLLINELIREYLEFNKYKYTASVLIAESGQPV). The interval 136–174 (TKHLSWKPSRRPDDDHVRKDTGPRTTTEELPAAAQAVSR) is disordered. At Ser-144 the chain carries Phosphoserine. Basic and acidic residues predominate over residues 145 to 157 (RRPDDDHVRKDTG).

This sequence belongs to the CEP43 family. Homooligomer; probably required for localization to centrosomes. Forms a complex with KIAA0753/OFIP and OFD1; within this complex may stabilize the interaction between OFD1 and KIAA0753/OFIP. Interacts with PCM1; this interaction may be mediated by KIAA0753/OFIP.

The protein localises to the cytoplasm. Its subcellular location is the cytoskeleton. It is found in the microtubule organizing center. The protein resides in the centrosome. It localises to the centriole. The protein localises to the cell projection. Its subcellular location is the cilium. It is found in the cilium basal body. The protein resides in the cytoplasmic granule. It localises to the centriolar satellite. Involved in the biogenesis of cilia. Required for the recruitment of PLK1 to centrosomes and S phase progression. The polypeptide is Centrosomal protein 20 (Mus musculus (Mouse)).